We begin with the raw amino-acid sequence, 366 residues long: RNA 3'-terminal phosphate cyclase (366 aa).

ATP is bound by residues Q104, P131, Y294, D297, Q298, and H320. The active-site Tele-AMP-histidine intermediate is H320.

The protein belongs to the RNA 3'-terminal cyclase family. Type 1 subfamily.

The protein resides in the nucleus. Its subcellular location is the nucleoplasm. It carries out the reaction a 3'-end 3'-phospho-ribonucleotide-RNA + ATP = a 3'-end 2',3'-cyclophospho-ribonucleotide-RNA + AMP + diphosphate. Catalyzes the conversion of 3'-phosphate to a 2',3'-cyclic phosphodiester at the end of RNA. The mechanism of action of the enzyme occurs in 3 steps: (A) adenylation of the enzyme by ATP; (B) transfer of adenylate to an RNA-N3'P to produce RNA-N3'PP5'A; (C) and attack of the adjacent 2'-hydroxyl on the 3'-phosphorus in the diester linkage to produce the cyclic end product. Likely functions in some aspects of cellular RNA processing. Function plays an important role in regulating axon regeneration by inhibiting central nervous system (CNS) axon regeneration following optic nerve injury. This is RNA 3'-terminal phosphate cyclase (RTCA) from Bos taurus (Bovine).